A 541-amino-acid chain; its full sequence is Chaperonin GroEL 2 (541 aa).

ATP contacts are provided by residues 29 to 32 (TLGP) and 86 to 90 (DGTTT). Lysine 132 is covalently cross-linked (Isoglutamyl lysine isopeptide (Lys-Gln) (interchain with Q-Cter in protein Pup)). Residues glycine 413, 476–478 (NAA), and aspartate 492 contribute to the ATP site.

Belongs to the chaperonin (HSP60) family. Forms a cylinder of 14 subunits composed of two heptameric rings stacked back-to-back. Interacts with the co-chaperonin GroES.

The protein localises to the secreted. The protein resides in the capsule. It localises to the cell surface. It is found in the cell wall. The enzyme catalyses ATP + H2O + a folded polypeptide = ADP + phosphate + an unfolded polypeptide.. Functionally, together with its co-chaperonin GroES, plays an essential role in assisting protein folding. The GroEL-GroES system forms a nano-cage that allows encapsulation of the non-native substrate proteins and provides a physical environment optimized to promote and accelerate protein folding. This Mycolicibacterium smegmatis (strain ATCC 700084 / mc(2)155) (Mycobacterium smegmatis) protein is Chaperonin GroEL 2.